A 345-amino-acid chain; its full sequence is C5a anaphylatoxin chemotactic receptor 1 (345 aa).

Residues Met1–Asp32 lie on the Extracellular side of the membrane. Tyr9 and Tyr11 each carry sulfotyrosine. Asn12 carries an N-linked (GlcNAc...) asparagine glycan. A helical transmembrane segment spans residues Leu33–Cys59. The Cytoplasmic portion of the chain corresponds to Glu60 to His64. A helical membrane pass occupies residues Ile65–Leu88. The Extracellular portion of the chain corresponds to Val89–Lys105. Cys104 and Cys183 are joined by a disulfide. Residues Val106–Ala127 form a helical membrane-spanning segment. The Cytoplasmic portion of the chain corresponds to Asp128–Ala148. The helical transmembrane segment at Trp149–Tyr169 threads the bilayer. Residues Arg170–Arg195 are Extracellular-facing. A helical membrane pass occupies residues Ala196 to Leu221. Over Leu222–Lys237 the chain is Cytoplasmic. The helical transmembrane segment at Val238–Leu260 threads the bilayer. Topologically, residues Ala261 to Asp277 are extracellular. A helical membrane pass occupies residues Ala278–Ala298. The Cytoplasmic portion of the chain corresponds to Gly299–Val345. Ser309, Ser312, Ser322, Ser329, and Ser333 each carry phosphoserine.

The protein belongs to the G-protein coupled receptor 1 family. Homodimer. May also form higher-order oligomers. Interacts (when phosphorylated) with ARRB1 and ARRB2; the interaction is associated with internalization of C5aR. Post-translationally, sulfation plays a critical role in the association of C5aR with C5a, but no significant role in the ability of the receptor to transduce a signal and mobilize calcium in response to a small peptide agonist. Phosphorylated on serine residues in response to C5a binding, resulting in internalization of the receptor and short-term desensitization to C5a. In terms of tissue distribution, expressed strongly in macrophages and spleen. Weak expression detected in lung, liver, brain, heart and kidney.

The protein localises to the cell membrane. Its subcellular location is the cytoplasmic vesicle. Functionally, receptor for the chemotactic and inflammatory peptide anaphylatoxin C5a. The ligand interacts with at least two sites on the receptor: a high-affinity site on the extracellular N-terminus, and a second site in the transmembrane region which activates downstream signaling events. Receptor activation stimulates chemotaxis, granule enzyme release, intracellular calcium release and superoxide anion production. The sequence is that of C5a anaphylatoxin chemotactic receptor 1 (C5AR1) from Cavia porcellus (Guinea pig).